We begin with the raw amino-acid sequence, 159 residues long: Putative ribosomal RNA large subunit methyltransferase H (159 aa).

S-adenosyl-L-methionine contacts are provided by residues Leu-76, Gly-108, and 127–132 (LSAMTF).

The protein belongs to the RNA methyltransferase RlmH family.

It localises to the cytoplasm. The catalysed reaction is pseudouridine(1915) in 23S rRNA + S-adenosyl-L-methionine = N(3)-methylpseudouridine(1915) in 23S rRNA + S-adenosyl-L-homocysteine + H(+). In terms of biological role, specifically methylates the pseudouridine at position 1915 (m3Psi1915) in 23S rRNA. This chain is Putative ribosomal RNA large subunit methyltransferase H, found in Methanospirillum hungatei JF-1 (strain ATCC 27890 / DSM 864 / NBRC 100397 / JF-1).